Consider the following 375-residue polypeptide: All-trans-retinol dehydrogenase [NAD(+)] ADH1B (375 aa).

At Ser2 the chain carries N-acetylserine. Ser23 bears the Phosphoserine mark. The residue at position 35 (Tyr35) is a Phosphotyrosine. Zn(2+)-binding residues include Cys47, His68, Cys98, Cys101, Cys104, Cys112, and Cys175. NAD(+) is bound by residues 200–205, Asp224, Lys229, 293–295, and Arg370; these read GLGGVG and VGV.

It belongs to the zinc-containing alcohol dehydrogenase family. In terms of assembly, dimer of identical or non-identical chains of three types; alpha, beta and gamma. It depends on Zn(2+) as a cofactor.

Its subcellular location is the cytoplasm. It catalyses the reaction all-trans-retinol + NAD(+) = all-trans-retinal + NADH + H(+). The catalysed reaction is all-trans-4-hydroxyretinol + NAD(+) = all-trans-4-hydroxyretinal + NADH + H(+). It carries out the reaction all-trans-4-oxoretinol + NAD(+) = all-trans-4-oxoretinal + NADH + H(+). Its function is as follows. Catalyzes the NAD-dependent oxidation of all-trans-retinol and its derivatives such as all-trans-4-hydroxyretinol and may participate in retinoid metabolism. In vitro can also catalyze the NADH-dependent reduction of all-trans-retinal and its derivatives such as all-trans-4-oxoretinal. Catalyzes in the oxidative direction with higher efficiency. Has the same affinity for all-trans-4-hydroxyretinol and all-trans-4-oxoretinal. This is All-trans-retinol dehydrogenase [NAD(+)] ADH1B from Homo sapiens (Human).